A 522-amino-acid chain; its full sequence is Flavin-dependent halogenase armH1 (522 aa).

Positions 16, 19, and 49 each coordinate FAD. 2 residues coordinate chloride: Ser328 and Gly329. Ile330 contacts FAD.

It belongs to the flavin-dependent halogenase family.

It carries out the reaction melleolide F + FADH2 + chloride + O2 = 6'-chloromelleolide F + FAD + 2 H2O + H(+). Flavin-dependent halogenase involved in the biosynthesis of melleolides, a range of antifungal and phytotoxic polyketide derivatives composed of an orsellinic acid (OA) moiety esterified to various sesquiterpene alcohols. The halogenase catalyzes the transfer of a single chlorine atom to the melleolide backbone, resulting in a 6'-chloromelleolide product. The enzyme acts on free substrate and does not depend on carrier-protein-dependent acceptor molecules. In Armillaria mellea (Honey mushroom), this protein is Flavin-dependent halogenase armH1.